A 364-amino-acid chain; its full sequence is 3-dehydroquinate synthase (364 aa).

Residues 105 to 109 (GVVGD), 129 to 130 (TT), lysine 142, and lysine 151 each bind NAD(+). Residues glutamate 184, histidine 247, and histidine 264 each coordinate Zn(2+).

It belongs to the sugar phosphate cyclases superfamily. Dehydroquinate synthase family. It depends on Co(2+) as a cofactor. Requires Zn(2+) as cofactor. The cofactor is NAD(+).

The protein resides in the cytoplasm. It catalyses the reaction 7-phospho-2-dehydro-3-deoxy-D-arabino-heptonate = 3-dehydroquinate + phosphate. It functions in the pathway metabolic intermediate biosynthesis; chorismate biosynthesis; chorismate from D-erythrose 4-phosphate and phosphoenolpyruvate: step 2/7. In terms of biological role, catalyzes the conversion of 3-deoxy-D-arabino-heptulosonate 7-phosphate (DAHP) to dehydroquinate (DHQ). In Acidithiobacillus ferrooxidans (strain ATCC 23270 / DSM 14882 / CIP 104768 / NCIMB 8455) (Ferrobacillus ferrooxidans (strain ATCC 23270)), this protein is 3-dehydroquinate synthase.